We begin with the raw amino-acid sequence, 118 residues long: uncharacterized protein (118 aa).

Positions 1-118 (MASARGAKQS…AARQNEKTAR (118 aa)) are disordered. Residues 13–28 (RVGTTRYTETSTVRVE) show a composition bias toward low complexity. The segment covering 29–49 (TSSHRVETSSRRVETSQRRSE) has biased composition (basic and acidic residues).

This is an uncharacterized protein from Homo sapiens (Human).